The sequence spans 316 residues: C-type lectin domain family 10 member A (316 aa).

Residues 1–39 are Cytoplasmic-facing; it reads MTRTYENFQYLENKVKVQGFKNGPLPLQSLLQRLCSGPC. The Endocytosis signal signature appears at 5 to 8; the sequence is YENF. The chain crosses the membrane as a helical; Signal-anchor for type II membrane protein span at residues 40–60; it reads HLLLSLGLGLLLLVIICVVGF. The Extracellular segment spans residues 61-316; that stretch reads QNSKFQRDLV…GLGQTSQESH (256 aa). N-linked (GlcNAc...) asparagine glycans are attached at residues Asn78 and Asn173. Residues 85–176 are a coiled coil; it reads AEIQALTSQG…VATLNNNAST (92 aa). Disulfide bonds link Cys181/Cys192, Cys209/Cys304, and Cys282/Cys296. The C-type lectin domain maps to 188–305; it reads HQDSCYWFSH…CQRPYHWVCE (118 aa). Ca(2+) contacts are provided by Val218, Asn220, Glu224, and Asp243. The a glycoprotein site is built by Gln267 and Asp269. Residues Asp269, Asp270, Glu280, and Asp281 each coordinate Ca(2+). An a glycoprotein-binding site is contributed by Glu280. The a glycoprotein site is built by His286 and Asn292. Residues Asn292, Asp293, and Glu305 each contribute to the Ca(2+) site.

Interacts with A-, B- and C-domain containing PTPRC/CD45 isoforms: isoform 1/CD45ABC, isoform 3/CD45AB, isoform 5/CD45BC and isoform 7/CD45B. Does not interact with PTPRC/CD45 isoform 2/CD45RO, a memory T cell marker. As to expression, expressed in myeloid antigen presenting cells in lymph nodes and skin (at protein level). Expressed in dermal dendritic cells (at protein level).

The protein resides in the cell membrane. It localises to the early endosome membrane. The protein localises to the lysosome membrane. C-type lectin receptor involved in recognition of N-acetylgalactosamine (GalNAc)-terminated glycans by myeloid antigen presenting cells (APCs). Binds in a Ca(2+)-dependent manner to alpha- and beta-linked GalNAc residues on glycoprotein and glycolipid antigens, including alphaGalNAc- and Galbeta1-&gt;3GalNAc-O-Ser/Thr also known as Tn and T antigens, LacdiNAc epitope GalNAcbeta1-&gt;4GlcNAc and its derivative GalNAcbeta1-&gt;4-(Fucalpha1-&gt;3)GlcNAc, O-linked core 5 and 6 glycans, and GM2 and GD2 gangliosides. Acts as a signaling receptor at the interface of APC-T cell interactions. On immature dendritic cells, recognizes Tn antigen-carrying PTPRC/CD45 receptor on effector T cells and downregulates PTRPN/CD45 phosphatase activity with an impact on T cell activation threshold, cytokine production and proliferation. Modulates dendritic cell maturation toward a tolerogenic phenotype leading to generation of regulatory CD4-positive T cell subset with immune suppressive functions. Acts as an endocytic pattern recognition receptor involved in antitumor immunity. During tumorigenesis, recognizes Tn antigens and its sialylated forms Neu5Ac-Tn and Neu5Gc-Tn expressed on tumor cell mucins. On immature dendritic cells, can internalize Tn-terminated immunogens and target them to endolysosomal compartment for MHC class I and II antigen presentation to CD8-positive and CD4-positive T cells, respectively. In Homo sapiens (Human), this protein is C-type lectin domain family 10 member A.